The primary structure comprises 124 residues: Small ribosomal subunit protein uS12c (124 aa).

Disordered regions lie at residues Met1–Pro28 and Ala104–Ser124. Basic residues-rich tracts occupy residues Glu11 to Lys20 and Asp109 to Ser124.

The protein belongs to the universal ribosomal protein uS12 family. As to quaternary structure, part of the 30S ribosomal subunit.

The protein resides in the plastid. The protein localises to the chloroplast. Functionally, with S4 and S5 plays an important role in translational accuracy. Located at the interface of the 30S and 50S subunits. In Pyropia yezoensis (Susabi-nori), this protein is Small ribosomal subunit protein uS12c (rps12).